The chain runs to 183 residues: SsrA-binding protein (183 aa).

Residues Met1–Asn27 form a disordered region. Over residues Ala13–Asn27 the composition is skewed to basic residues.

Belongs to the SmpB family.

It localises to the cytoplasm. Required for rescue of stalled ribosomes mediated by trans-translation. Binds to transfer-messenger RNA (tmRNA), required for stable association of tmRNA with ribosomes. tmRNA and SmpB together mimic tRNA shape, replacing the anticodon stem-loop with SmpB. tmRNA is encoded by the ssrA gene; the 2 termini fold to resemble tRNA(Ala) and it encodes a 'tag peptide', a short internal open reading frame. During trans-translation Ala-aminoacylated tmRNA acts like a tRNA, entering the A-site of stalled ribosomes, displacing the stalled mRNA. The ribosome then switches to translate the ORF on the tmRNA; the nascent peptide is terminated with the 'tag peptide' encoded by the tmRNA and targeted for degradation. The ribosome is freed to recommence translation, which seems to be the essential function of trans-translation. In Corynebacterium kroppenstedtii (strain DSM 44385 / JCM 11950 / CIP 105744 / CCUG 35717), this protein is SsrA-binding protein.